The following is a 183-amino-acid chain: Glutamyl-tRNA(Gln) amidotransferase subunit F, mitochondrial (183 aa).

This sequence belongs to the GatF family. In terms of assembly, subunit of the heterotrimeric GatFAB amidotransferase (AdT) complex, composed of A (HER2), B (PET112) and F (YGR102C) subunits.

It is found in the mitochondrion inner membrane. It carries out the reaction L-glutamyl-tRNA(Gln) + L-glutamine + ATP + H2O = L-glutaminyl-tRNA(Gln) + L-glutamate + ADP + phosphate + H(+). Allows the formation of correctly charged Gln-tRNA(Gln) through the transamidation of misacylated Glu-tRNA(Gln) in the mitochondria. The reaction takes place in the presence of glutamine and ATP through an activated gamma-phospho-Glu-tRNA(Gln). Required for proper protein synthesis within the mitochondrion. The polypeptide is Glutamyl-tRNA(Gln) amidotransferase subunit F, mitochondrial (Saccharomyces cerevisiae (strain ATCC 204508 / S288c) (Baker's yeast)).